Consider the following 410-residue polypeptide: 26S proteasome non-ATPase regulatory subunit 6 (410 aa).

A PCI domain is found at 207 to 382 (DFAGAADLFL…GVIEVNHRDS (176 aa)).

Belongs to the proteasome subunit S10 family. As to expression, expressed in multiple tissues including the intestine, pharynx and hypodermis.

Functionally, acts as a regulatory subunit of the 26S proteasome which is involved in the ATP-dependent degradation of ubiquitinated proteins. The sequence is that of 26S proteasome non-ATPase regulatory subunit 6 (rpn-7) from Caenorhabditis elegans.